A 218-amino-acid chain; its full sequence is UPF0319 protein PM0395 (218 aa).

The signal sequence occupies residues 1-21 (MKFRFAALASVALLTSTVSVA).

The protein belongs to the UPF0319 family.

This is UPF0319 protein PM0395 from Pasteurella multocida (strain Pm70).